Consider the following 754-residue polypeptide: 5-methyltetrahydropteroyltriglutamate--homocysteine methyltransferase (754 aa).

Residues 17–20 and K117 each bind 5-methyltetrahydropteroyltri-L-glutamate; that span reads RELK. Residues 431 to 433 and E484 contribute to the L-homocysteine site; that span reads IGS. Residues 431 to 433 and E484 each bind L-methionine; that span reads IGS. 5-methyltetrahydropteroyltri-L-glutamate is bound by residues 515 to 516 and W561; that span reads RC. Residue D599 participates in L-homocysteine binding. Residue D599 coordinates L-methionine. E605 is a 5-methyltetrahydropteroyltri-L-glutamate binding site. Zn(2+) contacts are provided by H641, C643, and E665. The Proton donor role is filled by H694. A Zn(2+)-binding site is contributed by C726.

Belongs to the vitamin-B12 independent methionine synthase family. It depends on Zn(2+) as a cofactor.

The catalysed reaction is 5-methyltetrahydropteroyltri-L-glutamate + L-homocysteine = tetrahydropteroyltri-L-glutamate + L-methionine. The protein operates within amino-acid biosynthesis; L-methionine biosynthesis via de novo pathway; L-methionine from L-homocysteine (MetE route): step 1/1. Catalyzes the transfer of a methyl group from 5-methyltetrahydrofolate to homocysteine resulting in methionine formation. The polypeptide is 5-methyltetrahydropteroyltriglutamate--homocysteine methyltransferase (Klebsiella pneumoniae subsp. pneumoniae (strain ATCC 700721 / MGH 78578)).